The following is a 170-amino-acid chain: Large ribosomal subunit protein bL17 (170 aa).

Positions 134-144 are enriched in low complexity; it reads ASAKAAQAQEK. The segment at 134–170 is disordered; sequence ASAKAAQAQEKPAQEEEVEATSDEVAYTSEPDKAAEH.

Belongs to the bacterial ribosomal protein bL17 family. Part of the 50S ribosomal subunit. Contacts protein L32.

This is Large ribosomal subunit protein bL17 from Mycobacterium leprae (strain Br4923).